We begin with the raw amino-acid sequence, 424 residues long: Tryptophan synthase beta chain (424 aa).

Lys-108 is subject to N6-(pyridoxal phosphate)lysine.

This sequence belongs to the TrpB family. As to quaternary structure, tetramer of two alpha and two beta chains. Pyridoxal 5'-phosphate serves as cofactor.

It carries out the reaction (1S,2R)-1-C-(indol-3-yl)glycerol 3-phosphate + L-serine = D-glyceraldehyde 3-phosphate + L-tryptophan + H2O. It participates in amino-acid biosynthesis; L-tryptophan biosynthesis; L-tryptophan from chorismate: step 5/5. Its function is as follows. The beta subunit is responsible for the synthesis of L-tryptophan from indole and L-serine. This is Tryptophan synthase beta chain (trpB) from Thermoplasma acidophilum (strain ATCC 25905 / DSM 1728 / JCM 9062 / NBRC 15155 / AMRC-C165).